Reading from the N-terminus, the 41-residue chain is Cuticle protein 32 (41 aa).

4 consecutive repeat copies span residues 17 to 20 (AAPA), 25 to 28 (AAPA), 31 to 34 (AAPA), and 38 to 41 (AAPA).

Its function is as follows. Component of the cuticle of migratory locust which contains more than 100 different structural proteins. The polypeptide is Cuticle protein 32 (Locusta migratoria (Migratory locust)).